We begin with the raw amino-acid sequence, 274 residues long: Thiamine kinase (274 aa).

The protein belongs to the thiamine kinase family.

It catalyses the reaction thiamine + ATP = thiamine phosphate + ADP + H(+). The protein operates within cofactor biosynthesis; thiamine diphosphate biosynthesis; thiamine phosphate from thiamine: step 1/1. Its function is as follows. Catalyzes the ATP-dependent phosphorylation of thiamine to thiamine phosphate. Is involved in thiamine salvage. The polypeptide is Thiamine kinase (Salmonella typhimurium (strain LT2 / SGSC1412 / ATCC 700720)).